Reading from the N-terminus, the 348-residue chain is Nicotinate-nucleotide pyrophosphorylase [carboxylating], chloroplastic (348 aa).

The N-terminal 41 residues, 1-41 (MISVSRFLSPQFYAIPRSFVKMSASATQTAGEVSMGIKPPS), are a transit peptide targeting the chloroplast. Substrate-binding positions include Arg-139, 170 to 172 (TRK), Arg-194, Lys-204, Glu-237, Asp-264, 296 to 298 (SGN), and 317 to 319 (SGA).

The protein belongs to the NadC/ModD family.

The protein resides in the plastid. Its subcellular location is the chloroplast. The catalysed reaction is nicotinate beta-D-ribonucleotide + CO2 + diphosphate = quinolinate + 5-phospho-alpha-D-ribose 1-diphosphate + 2 H(+). It participates in cofactor biosynthesis; NAD(+) biosynthesis; nicotinate D-ribonucleotide from quinolinate: step 1/1. Involved in the biosynthesis of NAD(+). Catalyzes the conversion of quinolate to nicotinate to nicotinate beta-D-ribonucleotide. In Arabidopsis thaliana (Mouse-ear cress), this protein is Nicotinate-nucleotide pyrophosphorylase [carboxylating], chloroplastic.